Consider the following 282-residue polypeptide: Uridylate-specific endoribonuclease B (282 aa).

The EndoU domain occupies 4–278 (GDRELSALIQ…IGTTYPVPVK (275 aa)). Residues histidine 156, histidine 172, and lysine 218 contribute to the active site.

It belongs to the ENDOU family. As to quaternary structure, monomer. Requires Mn(2+) as cofactor.

It carries out the reaction ribonucleotidyl-uridine-RNA = a 5'-end dephospho-uridine-RNA + a 3'-end 2',3'-cyclophospho-ribonucleotide-RNA. Its function is as follows. Endoribonuclease that cleaves single-stranded RNAs at 5' of uridylates and releases a product with a 2',3'-cyclic phosphate at the 3'-end. The UU and GU sites are more efficiently cleaved than CU and AU sites. This Danio rerio (Zebrafish) protein is Uridylate-specific endoribonuclease B (endoub).